The chain runs to 710 residues: Choline transporter-like protein 2 (710 aa).

Residues 1–34 (MEDDGKSPPDSAYGEPKKYDPNFKGPIQNRGCTD) are Cytoplasmic-facing. The chain crosses the membrane as a helical span at residues 35–55 (ILCCILIVLGIIAYVAVGIVA). Residues 56 to 236 (WTYGDPRKVI…KIFEDYTVSW (181 aa)) lie on the Extracellular side of the membrane. 3 N-linked (GlcNAc...) asparagine glycosylation sites follow: N147, N190, and N204. A helical transmembrane segment spans residues 237-257 (YWIIIGLIIAMVISLIFVVLL). Residues 258-260 (RFL) are Cytoplasmic-facing. The helical transmembrane segment at 261 to 281 (AGIMVWVMIVLVIAVMGYGIF) threads the bilayer. The Extracellular portion of the chain corresponds to 282 to 319 (HCYMEYARLKGQSGSDVTLKDIGFQTDIRVYLHLRQTW). Residues 320–340 (LAFMIILCILEVIVILLLIFL) traverse the membrane as a helical segment. At 341 to 368 (RKRIMIAIALIKEASRAVGFVMSSLVFP) the chain is on the cytoplasmic side. The chain crosses the membrane as a helical span at residues 369-389 (LFTFLLVCLCIAYWAITAVFL). Topologically, residues 390–458 (STSNEAVYKV…FQIYNAFMFL (69 aa)) are extracellular. N-linked (GlcNAc...) asparagine glycans are attached at residues N401, N418, and N421. The chain crosses the membrane as a helical span at residues 459–481 (WLANFVIALGQVTLAGAFASYYW). The Cytoplasmic portion of the chain corresponds to 482–508 (AFKKPDDMPAFPIFSSLGRALRYHTGS). Residues 509-529 (LAFGSLILAIVQMIRILLEYL) traverse the membrane as a helical segment. The Extracellular segment spans residues 530–567 (DHKLKGADNKCARFLLCCLKCCFWCLEKFIKFLNRNAY). The helical transmembrane segment at 568–588 (IMIAIYGTNFCTSARNAFFLL) threads the bilayer. At 589 to 603 (MRNIIRVAVLDKVTD) the chain is on the cytoplasmic side. Residues 604–624 (FLLFLGKLLVVGCVGILAFFF) traverse the membrane as a helical segment. The Extracellular portion of the chain corresponds to 625–642 (FSRRIQIVQDTAPTLNYY). A helical transmembrane segment spans residues 643–663 (WVPILTVILGSYLIAHGFFSV). At 664-710 (YGMCVDTLFLCFLEDLERNDGSTERPYFMSGSLQKLLNKSNQTKPDK) the chain is on the cytoplasmic side.

This sequence belongs to the CTL (choline transporter-like) family.

The protein localises to the cell membrane. It localises to the mitochondrion outer membrane. It carries out the reaction choline(out) + n H(+)(in) = choline(in) + n H(+)(out). It catalyses the reaction ethanolamine(out) + n H(+)(in) = ethanolamine(in) + n H(+)(out). Choline/H+ antiporter, mainly in mitochodria. Also acts as a low-affinity ethanolamine/H+ antiporter, regulating the supply of extracellular ethanolamine (Etn) for the CDP-Etn pathway, redistribute intracellular Etn and balance the CDP-Cho and CDP-Etn arms of the Kennedy pathway. The chain is Choline transporter-like protein 2 (slc44a2) from Xenopus laevis (African clawed frog).